Reading from the N-terminus, the 189-residue chain is Homeobox protein HD-2 (189 aa).

Positions 119–181 (KPRTRANFPM…NARRRILPFM (63 aa)) form a DNA-binding region, homeobox; TALE-type.

This sequence belongs to the TALE/KNOX homeobox family.

It is found in the nucleus. The polypeptide is Homeobox protein HD-2 (HD-2) (Encephalitozoon cuniculi (strain GB-M1) (Microsporidian parasite)).